We begin with the raw amino-acid sequence, 455 residues long: Tubulin alpha chain (455 aa).

Residues glutamine 11, glutamate 77, serine 145, glycine 149, threonine 150, serine 184, asparagine 211, and asparagine 233 each contribute to the GTP site. Glutamate 77 lines the Mg(2+) pocket. Glutamate 259 is an active-site residue.

Belongs to the tubulin family. As to quaternary structure, dimer of alpha and beta chains. A typical microtubule is a hollow water-filled tube with an outer diameter of 25 nm and an inner diameter of 15 nM. Alpha-beta heterodimers associate head-to-tail to form protofilaments running lengthwise along the microtubule wall with the beta-tubulin subunit facing the microtubule plus end conferring a structural polarity. Microtubules usually have 13 protofilaments but different protofilament numbers can be found in some organisms and specialized cells. Mg(2+) serves as cofactor.

Its subcellular location is the cytoplasm. The protein resides in the cytoskeleton. The enzyme catalyses GTP + H2O = GDP + phosphate + H(+). Functionally, tubulin is the major constituent of microtubules, a cylinder consisting of laterally associated linear protofilaments composed of alpha- and beta-tubulin heterodimers. Microtubules grow by the addition of GTP-tubulin dimers to the microtubule end, where a stabilizing cap forms. Below the cap, tubulin dimers are in GDP-bound state, owing to GTPase activity of alpha-tubulin. This chain is Tubulin alpha chain, found in Entamoeba histolytica (strain ATCC 30459 / HM-1:IMSS / ABRM).